The following is a 218-amino-acid chain: MAMFEQMRANVGKLLKGIDRYNPENLATLERYVETQAKENAYDLEANLAVLKLYQFNPAFFQTTVTAQILLKALTNLPHTDFTLCKCMIDQAHQEERPIRQILYLGDLLETCHFQAFWQALDENMDLLEGITGFEDSVRKFICHVVGITYQHIDRWLLAEMLGDLTDNQLKVWMSKYGWSADESGQVFICSQEESIKPKNIVEKIDFDSVSSIMASSQ.

Alanine 2 carries the N-acetylalanine modification. Threonine 28 bears the Phosphothreonine mark. A PCI domain is found at 42–204; the sequence is YDLEANLAVL…SIKPKNIVEK (163 aa). Position 217 is a phosphoserine (serine 217).

Belongs to the eIF-3 subunit K family. Component of the eukaryotic translation initiation factor 3 (eIF-3) complex, which is composed of 13 subunits: EIF3A, EIF3B, EIF3C, EIF3D, EIF3E, EIF3F, EIF3G, EIF3H, EIF3I, EIF3J, EIF3K, EIF3L and EIF3M. The eIF-3 complex appears to include 3 stable modules: module A is composed of EIF3A, EIF3B, EIF3G and EIF3I; module B is composed of EIF3F, EIF3H, and EIF3M; and module C is composed of EIF3C, EIF3D, EIF3E, EIF3K and EIF3L. EIF3C of module C binds EIF3B of module A and EIF3H of module B, thereby linking the three modules. EIF3J is a labile subunit that binds to the eIF-3 complex via EIF3B. The eIF-3 complex interacts with RPS6KB1 under conditions of nutrient depletion. Mitogenic stimulation leads to binding and activation of a complex composed of MTOR and RPTOR, leading to phosphorylation and release of RPS6KB1 and binding of EIF4B to eIF-3. Identified in a HCV IRES-mediated translation complex, at least composed of EIF3C, IGF2BP1, RPS3 and HCV RNA-replicon. Interacts with ALKBH4, IFIT1 and IFIT2.

The protein resides in the nucleus. Its subcellular location is the cytoplasm. In terms of biological role, component of the eukaryotic translation initiation factor 3 (eIF-3) complex, which is required for several steps in the initiation of protein synthesis. The eIF-3 complex associates with the 40S ribosome and facilitates the recruitment of eIF-1, eIF-1A, eIF-2:GTP:methionyl-tRNAi and eIF-5 to form the 43S pre-initiation complex (43S PIC). The eIF-3 complex stimulates mRNA recruitment to the 43S PIC and scanning of the mRNA for AUG recognition. The eIF-3 complex is also required for disassembly and recycling of post-termination ribosomal complexes and subsequently prevents premature joining of the 40S and 60S ribosomal subunits prior to initiation. The eIF-3 complex specifically targets and initiates translation of a subset of mRNAs involved in cell proliferation, including cell cycling, differentiation and apoptosis, and uses different modes of RNA stem-loop binding to exert either translational activation or repression. The sequence is that of Eukaryotic translation initiation factor 3 subunit K (Eif3k) from Mus musculus (Mouse).